The chain runs to 322 residues: MIDELISIIGIPALAFAISTYIPGIQRKIEARIQQRIGPSILAPGFWAFFKFLFKETKAPDANLPKLYNLLPLLSIVVLWALLSITSLTSFHILSNEIGIVGLLKLEEMMYVILGSLAFSIMGWKMPFIDECKGTPFIKTLKLSLEQLGAVRSFKMITIGSFPFYLATFLPFVQKKSIFLKDIVGEPFLFSLAGIFGAACYFIGYVIMIKEYPFSITHTKADVIEGPTMELIAKYRALYLASKELLLIALGSLFATLYLGIAPDIENPITIVENFAIALIFPILATFVRAFSPVLLFKQIYPISYVATLIGVIGFIFALLGW.

The next 9 membrane-spanning stretches (helical) occupy residues 5–25 (LISIIGIPALAFAISTYIPGI), 37–57 (IGPSILAPGFWAFFKFLFKET), 71–91 (LPLLSIVVLWALLSITSLTSF), 109–129 (MMYVILGSLAFSIMGWKMPFI), 153–173 (SFKMITIGSFPFYLATFLPFV), 189–209 (LFSLAGIFGAACYFIGYVIMI), 245–265 (LLLIALGSLFATLYLGIAPDI), 268–288 (PITIVENFAIALIFPILATFV), and 300–320 (IYPISYVATLIGVIGFIFALL).

It localises to the cell membrane. This is an uncharacterized protein from Methanocaldococcus jannaschii (strain ATCC 43067 / DSM 2661 / JAL-1 / JCM 10045 / NBRC 100440) (Methanococcus jannaschii).